The sequence spans 536 residues: Phosphoenolpyruvate carboxykinase (ATP) (536 aa).

Substrate is bound by residues R61, Y195, and K201. ATP-binding positions include K201, H220, and 236-244 (GLSGTGKTT). Positions 201 and 220 each coordinate Mn(2+). Residue D257 participates in Mn(2+) binding. ATP is bound by residues E285, R322, and T447. R322 contributes to the substrate binding site.

The protein belongs to the phosphoenolpyruvate carboxykinase (ATP) family. The cofactor is Mn(2+).

Its subcellular location is the cytoplasm. The catalysed reaction is oxaloacetate + ATP = phosphoenolpyruvate + ADP + CO2. The protein operates within carbohydrate biosynthesis; gluconeogenesis. In terms of biological role, involved in the gluconeogenesis. Catalyzes the conversion of oxaloacetate (OAA) to phosphoenolpyruvate (PEP) through direct phosphoryl transfer between the nucleoside triphosphate and OAA. This chain is Phosphoenolpyruvate carboxykinase (ATP), found in Rhizobium meliloti (strain 1021) (Ensifer meliloti).